We begin with the raw amino-acid sequence, 311 residues long: Pyrimidine-specific ribonucleoside hydrolase RihA (311 aa).

Residue H240 is part of the active site.

This sequence belongs to the IUNH family. RihA subfamily.

Its function is as follows. Hydrolyzes cytidine or uridine to ribose and cytosine or uracil, respectively. This chain is Pyrimidine-specific ribonucleoside hydrolase RihA, found in Salmonella dublin (strain CT_02021853).